The chain runs to 431 residues: Adenylosuccinate synthetase (431 aa).

Residues 12 to 18 and 40 to 42 contribute to the GTP site; these read GDEGKGK and GHT. Asp13 functions as the Proton acceptor in the catalytic mechanism. Residues Asp13 and Gly40 each contribute to the Mg(2+) site. Residues 13–16, 38–41, Thr131, Arg145, Gln225, Thr240, and Arg304 each bind IMP; these read DEGK and NAGH. His41 (proton donor) is an active-site residue. A substrate-binding site is contributed by 300–306; it reads TNTGRRR. GTP-binding positions include Arg306, 332 to 334, and 414 to 416; these read KLD and STS.

This sequence belongs to the adenylosuccinate synthetase family. In terms of assembly, homodimer. It depends on Mg(2+) as a cofactor.

Its subcellular location is the cytoplasm. It carries out the reaction IMP + L-aspartate + GTP = N(6)-(1,2-dicarboxyethyl)-AMP + GDP + phosphate + 2 H(+). It participates in purine metabolism; AMP biosynthesis via de novo pathway; AMP from IMP: step 1/2. Its function is as follows. Plays an important role in the de novo pathway of purine nucleotide biosynthesis. Catalyzes the first committed step in the biosynthesis of AMP from IMP. The protein is Adenylosuccinate synthetase of Methylocella silvestris (strain DSM 15510 / CIP 108128 / LMG 27833 / NCIMB 13906 / BL2).